The following is a 173-amino-acid chain: MNPYILTPDLNGEGLHIGIVRARFNEEIGQAQLQACLEELGKLGVDERDVMVVSVPGALELGVALARMAESYEFDALIALGAVIRGETYHFEVVSNESAAAISRIALETGIPVANGVLTVDTDEQAQARAAGKGADCAQVAVEMANLAAALEPEEDDEDDEDEDFDDEEDDGR.

Residues phenylalanine 24, 58 to 60 (ALE), and 82 to 84 (AVI) each bind 5-amino-6-(D-ribitylamino)uracil. 87-88 (ET) lines the (2S)-2-hydroxy-3-oxobutyl phosphate pocket. The active-site Proton donor is histidine 90. A 5-amino-6-(D-ribitylamino)uracil-binding site is contributed by asparagine 115. Arginine 129 contributes to the (2S)-2-hydroxy-3-oxobutyl phosphate binding site. The tract at residues 150–173 (ALEPEEDDEDDEDEDFDDEEDDGR) is disordered. Residues 152 to 173 (EPEEDDEDDEDEDFDDEEDDGR) show a composition bias toward acidic residues.

The protein belongs to the DMRL synthase family.

The enzyme catalyses (2S)-2-hydroxy-3-oxobutyl phosphate + 5-amino-6-(D-ribitylamino)uracil = 6,7-dimethyl-8-(1-D-ribityl)lumazine + phosphate + 2 H2O + H(+). The protein operates within cofactor biosynthesis; riboflavin biosynthesis; riboflavin from 2-hydroxy-3-oxobutyl phosphate and 5-amino-6-(D-ribitylamino)uracil: step 1/2. Its function is as follows. Catalyzes the formation of 6,7-dimethyl-8-ribityllumazine by condensation of 5-amino-6-(D-ribitylamino)uracil with 3,4-dihydroxy-2-butanone 4-phosphate. This is the penultimate step in the biosynthesis of riboflavin. This Bordetella pertussis (strain Tohama I / ATCC BAA-589 / NCTC 13251) protein is 6,7-dimethyl-8-ribityllumazine synthase.